Consider the following 279-residue polypeptide: Small ribosomal subunit protein uS9m (279 aa).

Belongs to the universal ribosomal protein uS9 family.

The protein resides in the mitochondrion. This Eremothecium gossypii (strain ATCC 10895 / CBS 109.51 / FGSC 9923 / NRRL Y-1056) (Yeast) protein is Small ribosomal subunit protein uS9m (MRPS9).